The chain runs to 871 residues: Translation initiation factor IF-2 (871 aa).

2 disordered regions span residues 60–101 (KKNI…QEVK) and 184–203 (ESLK…KKES). A compositionally biased stretch (basic residues) spans 61-72 (KNIKTPTAKKPK). A compositionally biased stretch (basic and acidic residues) spans 73-101 (KENIKEQEKLNESEKKEPKKEEKLKQEVK). The region spanning 370–537 (TRAPVITIMG…IVLLQADILE (168 aa)) is the tr-type G domain. The segment at 379–386 (GHVDHGKT) is G1. 379-386 (GHVDHGKT) is a GTP binding site. The segment at 404-408 (GITQH) is G2. The G3 stretch occupies residues 425–428 (DTPG). Residues 425–429 (DTPGH) and 479–482 (NKMD) contribute to the GTP site. Positions 479–482 (NKMD) are G4. Positions 515-517 (SAK) are G5.

This sequence belongs to the TRAFAC class translation factor GTPase superfamily. Classic translation factor GTPase family. IF-2 subfamily.

It is found in the cytoplasm. Its function is as follows. One of the essential components for the initiation of protein synthesis. Protects formylmethionyl-tRNA from spontaneous hydrolysis and promotes its binding to the 30S ribosomal subunits. Also involved in the hydrolysis of GTP during the formation of the 70S ribosomal complex. The polypeptide is Translation initiation factor IF-2 (Campylobacter jejuni subsp. jejuni serotype O:23/36 (strain 81-176)).